The following is a 235-amino-acid chain: Probable transcriptional regulatory protein CFF8240_0424 (235 aa).

This sequence belongs to the TACO1 family.

Its subcellular location is the cytoplasm. This chain is Probable transcriptional regulatory protein CFF8240_0424, found in Campylobacter fetus subsp. fetus (strain 82-40).